Here is a 129-residue protein sequence, read N- to C-terminus: Probable cytochrome b5 2 (129 aa).

Residues 3 to 79 (EKTITVEEVL…LEKFYIGNLL (77 aa)) enclose the Cytochrome b5 heme-binding domain. Residues His38 and His62 each contribute to the heme site. Residues 105-125 (VKPAMWLFVLVMVVAYFAFRK) form a helical membrane-spanning segment.

It belongs to the cytochrome b5 family.

It is found in the endoplasmic reticulum membrane. It localises to the microsome membrane. The protein resides in the mitochondrion. Its function is as follows. Membrane bound hemoprotein which function as an electron carrier for several membrane bound oxygenases. The protein is Probable cytochrome b5 2 (oca8) of Schizosaccharomyces pombe (strain 972 / ATCC 24843) (Fission yeast).